The chain runs to 132 residues: Small ribosomal subunit protein uS8 (132 aa).

Belongs to the universal ribosomal protein uS8 family. As to quaternary structure, part of the 30S ribosomal subunit. Contacts proteins S5 and S12.

Its function is as follows. One of the primary rRNA binding proteins, it binds directly to 16S rRNA central domain where it helps coordinate assembly of the platform of the 30S subunit. The sequence is that of Small ribosomal subunit protein uS8 from Paracoccus denitrificans (strain Pd 1222).